Reading from the N-terminus, the 597-residue chain is Probable translation initiation factor IF-2 (597 aa).

One can recognise a tr-type G domain in the interval 8 to 225 (LRQPIVVVLG…LLAGLTQQYL (218 aa)). Residues 17–24 (GHVDHGKT) are G1. 17–24 (GHVDHGKT) is a GTP binding site. The tract at residues 42-46 (EMTQE) is G2. Residues 81–84 (DTPG) are G3. GTP is bound by residues 81-85 (DTPGH) and 135-138 (NKID). Positions 135-138 (NKID) are G4. The G5 stretch occupies residues 203–205 (SGK).

Belongs to the TRAFAC class translation factor GTPase superfamily. Classic translation factor GTPase family. IF-2 subfamily.

Its function is as follows. Function in general translation initiation by promoting the binding of the formylmethionine-tRNA to ribosomes. Seems to function along with eIF-2. The protein is Probable translation initiation factor IF-2 of Metallosphaera sedula (strain ATCC 51363 / DSM 5348 / JCM 9185 / NBRC 15509 / TH2).